Reading from the N-terminus, the 241-residue chain is MIIPSIDLIEGNIVRLYQGNYDTKTFYQNNIYDIALKYYNQGAKIVHLVDLDGALCPNNKQTSLIKNLLNYFNFHIQVGGGIRSYKDVETLLLNGAKRVVIGSSAINNITEVEKWLLEFGYKSIVLALDVYVRNNGYKEVVINGWKNRSNVSLESVLERFSTLGIKYVLCTDVKKDGTCLGPNFTLYKNISKLFKNVCFQLSGGIGTISDVISAKKSGIKDIIIGRALLENKFSLLEAIRC.

Aspartate 7 (proton acceptor) is an active-site residue. Catalysis depends on aspartate 129, which acts as the Proton donor.

It belongs to the HisA/HisF family.

It is found in the cytoplasm. It carries out the reaction 1-(5-phospho-beta-D-ribosyl)-5-[(5-phospho-beta-D-ribosylamino)methylideneamino]imidazole-4-carboxamide = 5-[(5-phospho-1-deoxy-D-ribulos-1-ylimino)methylamino]-1-(5-phospho-beta-D-ribosyl)imidazole-4-carboxamide. It functions in the pathway amino-acid biosynthesis; L-histidine biosynthesis; L-histidine from 5-phospho-alpha-D-ribose 1-diphosphate: step 4/9. In Buchnera aphidicola subsp. Baizongia pistaciae (strain Bp), this protein is 1-(5-phosphoribosyl)-5-[(5-phosphoribosylamino)methylideneamino] imidazole-4-carboxamide isomerase.